The primary structure comprises 458 residues: Bifunctional protein GlmU (458 aa).

Residues methionine 1–lysine 230 are pyrophosphorylase. UDP-N-acetyl-alpha-D-glucosamine contacts are provided by residues leucine 14 to glycine 17, lysine 28, glutamine 79, and glycine 84 to threonine 85. Mg(2+) is bound at residue aspartate 108. UDP-N-acetyl-alpha-D-glucosamine is bound by residues glycine 141, glutamate 155, asparagine 170, and asparagine 228. Asparagine 228 contacts Mg(2+). The tract at residues glutamine 231–lysine 251 is linker. Residues glycine 252 to lysine 458 form an N-acetyltransferase region. UDP-N-acetyl-alpha-D-glucosamine contacts are provided by arginine 334 and lysine 352. The active-site Proton acceptor is the histidine 364. UDP-N-acetyl-alpha-D-glucosamine-binding residues include tyrosine 367 and asparagine 378. Residues alanine 381, asparagine 387–tyrosine 388, serine 406, alanine 424, and arginine 441 each bind acetyl-CoA.

This sequence in the N-terminal section; belongs to the N-acetylglucosamine-1-phosphate uridyltransferase family. In the C-terminal section; belongs to the transferase hexapeptide repeat family. Homotrimer. Mg(2+) serves as cofactor.

It is found in the cytoplasm. It catalyses the reaction alpha-D-glucosamine 1-phosphate + acetyl-CoA = N-acetyl-alpha-D-glucosamine 1-phosphate + CoA + H(+). It carries out the reaction N-acetyl-alpha-D-glucosamine 1-phosphate + UTP + H(+) = UDP-N-acetyl-alpha-D-glucosamine + diphosphate. It participates in nucleotide-sugar biosynthesis; UDP-N-acetyl-alpha-D-glucosamine biosynthesis; N-acetyl-alpha-D-glucosamine 1-phosphate from alpha-D-glucosamine 6-phosphate (route II): step 2/2. The protein operates within nucleotide-sugar biosynthesis; UDP-N-acetyl-alpha-D-glucosamine biosynthesis; UDP-N-acetyl-alpha-D-glucosamine from N-acetyl-alpha-D-glucosamine 1-phosphate: step 1/1. It functions in the pathway bacterial outer membrane biogenesis; LPS lipid A biosynthesis. Catalyzes the last two sequential reactions in the de novo biosynthetic pathway for UDP-N-acetylglucosamine (UDP-GlcNAc). The C-terminal domain catalyzes the transfer of acetyl group from acetyl coenzyme A to glucosamine-1-phosphate (GlcN-1-P) to produce N-acetylglucosamine-1-phosphate (GlcNAc-1-P), which is converted into UDP-GlcNAc by the transfer of uridine 5-monophosphate (from uridine 5-triphosphate), a reaction catalyzed by the N-terminal domain. The sequence is that of Bifunctional protein GlmU from Methylobacillus flagellatus (strain ATCC 51484 / DSM 6875 / VKM B-1610 / KT).